Consider the following 209-residue polypeptide: Ribosomal RNA large subunit methyltransferase E (209 aa).

Residues Gly-63, Trp-65, Asp-83, Asp-99, and Asp-124 each coordinate S-adenosyl-L-methionine. Lys-164 acts as the Proton acceptor in catalysis.

This sequence belongs to the class I-like SAM-binding methyltransferase superfamily. RNA methyltransferase RlmE family.

The protein localises to the cytoplasm. The catalysed reaction is uridine(2552) in 23S rRNA + S-adenosyl-L-methionine = 2'-O-methyluridine(2552) in 23S rRNA + S-adenosyl-L-homocysteine + H(+). Specifically methylates the uridine in position 2552 of 23S rRNA at the 2'-O position of the ribose in the fully assembled 50S ribosomal subunit. The protein is Ribosomal RNA large subunit methyltransferase E of Tolumonas auensis (strain DSM 9187 / NBRC 110442 / TA 4).